The chain runs to 215 residues: Adenylate kinase (215 aa).

Residue 10 to 15 (GAGKGT) participates in ATP binding. The interval 30–59 (STGDMLRAAVKAGTPIGLKAKAVMEAGELV) is NMP. Residues T31, R36, 57–59 (ELV), 85–88 (GYPR), and Q92 each bind AMP. Positions 126–163 (GRYTCANCGEGYHDRFKQPKVAGVCDVCGSAEFKRRPD) are LID. Position 127 (R127) interacts with ATP. Zn(2+)-binding residues include C130, C133, C150, and C153. Positions 160 and 172 each coordinate AMP. Residue A200 coordinates ATP.

This sequence belongs to the adenylate kinase family. As to quaternary structure, monomer.

Its subcellular location is the cytoplasm. It catalyses the reaction AMP + ATP = 2 ADP. Its pathway is purine metabolism; AMP biosynthesis via salvage pathway; AMP from ADP: step 1/1. In terms of biological role, catalyzes the reversible transfer of the terminal phosphate group between ATP and AMP. Plays an important role in cellular energy homeostasis and in adenine nucleotide metabolism. This is Adenylate kinase from Rhizorhabdus wittichii (strain DSM 6014 / CCUG 31198 / JCM 15750 / NBRC 105917 / EY 4224 / RW1) (Sphingomonas wittichii).